The sequence spans 577 residues: MRRTKGRTDSPDVQSLNINADYGEAASLTADDSTAHKSDKKHDPEAKKQVTITVQPGVKPKPTVKKRSTPSADLDIHKEIQKCREEGATRLDLSKAAVTVLPKELKELTSLRELYLYGNRIAVLPPEVGLLPNLETLALSENNLTTLPDNLVKLTKLKVLDLRHNKIKEIPDVIYKLTTLTTLYLRFNRISVVESGIGNLKLLERLSLRENKIKILPRVIGQLVHLVTLDISHNHIENLPAEIGNCVHMTSLDLQHNDIPSLPDSIGRLTAMTRLGLRYNQLSSLPDSLANCSGIDEFNIEGNNIAELPEKLLSSLKNLTSLTLSRNKFEVFPAGPPKQFCQVNTFIMEHNRMQKIPFGVFNKAKYLSKLNVKDNQLTSLPLDFGSWISLVELNVATNQISKLPEDIQWLVNLEVLILSNNLLKKLPRGIGALRKLRVLDIEENKLESIPTEIEYLRSLERLVLQSNCLGSLPRSIGYLSSVTYLSVGENELVSVPQEIGNMESLEQLYLNDNENLQSLPYELVLCGSLQIMSIENCPLSALPSQIVAGGPSLVIQYLRLQGPYNGMVDTGVPTSDV.

2 stretches are compositionally biased toward basic and acidic residues: residues Met1–Ser10 and Ser33–Lys48. Residues Met1–Ser71 are disordered. 20 LRR repeats span residues Gly87 to Thr109, Ser110 to Leu131, Asn133 to Thr155, Lys156 to Leu177, Thr179 to Lys201, Leu202 to Leu223, His225 to Cys246, His248 to Leu269, Ala271 to Cys292, Gly294 to Ser315, Asn318 to Gln339, Gln342 to Lys363, Tyr366 to Trp387, Ser389 to Leu410, Asn412 to Arg434, Lys435 to Leu456, Ser458 to Leu479, Ser481 to Met502, Ser504 to Cys526, and Ser528 to Gly549.

The protein belongs to the SHOC2 family.

Its function is as follows. Acts as a Ras effector and participates in MAPK pathway activation. Probably acts as a scaffolding protein in a protein phosphatase complex that specifically dephosphorylates Raf kinase and stimulate Raf activity at specialized signaling complexes upon Ras activation. The sequence is that of Leucine-rich repeat protein soc-2 homolog from Nematostella vectensis (Starlet sea anemone).